A 294-amino-acid polypeptide reads, in one-letter code: Acetylglutamate kinase (294 aa).

Residues glycine 63–glycine 64, arginine 85, and asparagine 188 contribute to the substrate site.

Belongs to the acetylglutamate kinase family. ArgB subfamily.

It localises to the cytoplasm. The enzyme catalyses N-acetyl-L-glutamate + ATP = N-acetyl-L-glutamyl 5-phosphate + ADP. It functions in the pathway amino-acid biosynthesis; L-arginine biosynthesis; N(2)-acetyl-L-ornithine from L-glutamate: step 2/4. Catalyzes the ATP-dependent phosphorylation of N-acetyl-L-glutamate. This Methanococcus maripaludis (strain DSM 14266 / JCM 13030 / NBRC 101832 / S2 / LL) protein is Acetylglutamate kinase.